Consider the following 274-residue polypeptide: Shikimate dehydrogenase (NADP(+)) (274 aa).

Shikimate-binding positions include 14-16 (SKS) and Thr60. Lys64 acts as the Proton acceptor in catalysis. NADP(+) is bound at residue Glu76. Asn85 and Asp101 together coordinate shikimate. NADP(+) contacts are provided by residues 126-130 (GAGGA), 150-155 (NRTARK), and Met214. Tyr216 provides a ligand contact to shikimate. Gly238 serves as a coordination point for NADP(+).

Belongs to the shikimate dehydrogenase family. Homodimer.

It catalyses the reaction shikimate + NADP(+) = 3-dehydroshikimate + NADPH + H(+). It participates in metabolic intermediate biosynthesis; chorismate biosynthesis; chorismate from D-erythrose 4-phosphate and phosphoenolpyruvate: step 4/7. Its function is as follows. Involved in the biosynthesis of the chorismate, which leads to the biosynthesis of aromatic amino acids. Catalyzes the reversible NADPH linked reduction of 3-dehydroshikimate (DHSA) to yield shikimate (SA). The sequence is that of Shikimate dehydrogenase (NADP(+)) from Pseudomonas aeruginosa (strain ATCC 15692 / DSM 22644 / CIP 104116 / JCM 14847 / LMG 12228 / 1C / PRS 101 / PAO1).